The sequence spans 452 residues: Chromosomal replication initiator protein DnaA (452 aa).

The domain I, interacts with DnaA modulators stretch occupies residues 1 to 72; that stretch reads MPDMLTLWTD…LVEYAYQAAH (72 aa). Residues 72-114 are domain II; that stretch reads HEDIQPVLILENERQQQATLKAKTAPVAAGEPVEPTPTFMKET. A domain III, AAA+ region region spans residues 115 to 331; the sequence is ALNSRYTFDT…GALARVQAYS (217 aa). Positions 159, 161, 162, and 163 each coordinate ATP. Positions 332-452 are domain IV, binds dsDNA; it reads QLMHQPIATD…IDSLKDDLRR (121 aa).

It belongs to the DnaA family. As to quaternary structure, oligomerizes as a right-handed, spiral filament on DNA at oriC.

The protein localises to the cytoplasm. Plays an essential role in the initiation and regulation of chromosomal replication. ATP-DnaA binds to the origin of replication (oriC) to initiate formation of the DNA replication initiation complex once per cell cycle. Binds the DnaA box (a 9 base pair repeat at the origin) and separates the double-stranded (ds)DNA. Forms a right-handed helical filament on oriC DNA; dsDNA binds to the exterior of the filament while single-stranded (ss)DNA is stabiized in the filament's interior. The ATP-DnaA-oriC complex binds and stabilizes one strand of the AT-rich DNA unwinding element (DUE), permitting loading of DNA polymerase. After initiation quickly degrades to an ADP-DnaA complex that is not apt for DNA replication. Binds acidic phospholipids. This Levilactobacillus brevis (strain ATCC 367 / BCRC 12310 / CIP 105137 / JCM 1170 / LMG 11437 / NCIMB 947 / NCTC 947) (Lactobacillus brevis) protein is Chromosomal replication initiator protein DnaA.